A 1250-amino-acid polypeptide reads, in one-letter code: Ras-associated and pleckstrin homology domains-containing protein 1 (1250 aa).

At M1 the chain carries N-acetylmethionine. Positions 1-23 are enriched in acidic residues; sequence MEQLSDEEIDHGAEEDSDKEDQD. The segment at 1-26 is disordered; the sequence is MEQLSDEEIDHGAEEDSDKEDQDLDK. S5, S17, S54, S150, S192, S203, and S205 each carry phosphoserine. Residues 179–217 form a disordered region; sequence TKPLVTNQHRRTASAGTVSDAEVHSISNSSHSSITSAAS. Low complexity predominate over residues 202–217; it reads HSISNSSHSSITSAAS. The region spanning 269 to 355 is the Ras-associating domain; the sequence is KKLVIRVHMS…NKLIFMERIE (87 aa). Residues 396–505 form the PH domain; it reads VPEIEGVLWL…WVNGIRIAKY (110 aa). Y426 and Y456 each carry phosphotyrosine; by ABL1. The span at 535 to 551 shows a compositional bias: low complexity; it reads KSGSSSSSIPESQSNHS. Disordered regions lie at residues 535–570, 588–663, 675–1036, 1050–1162, and 1176–1250; these read KSGS…VRSQ, EESS…AAPM, NASQ…SGVN, APVL…LSVQ, and KSIT…SRDW. Positions 552 to 570 are enriched in polar residues; the sequence is NQSDSGVSDTQPAGHVRSQ. A compositionally biased stretch (basic and acidic residues) spans 588-597; sequence EESSKARMES. Position 610 is a phosphoserine (S610). The span at 624-650 shows a compositional bias: pro residues; sequence PSPPLPPPPPPPPPPPPPPPPPPPPLP. The span at 651–662 shows a compositional bias: low complexity; sequence SQSAPSAGSAAP. 2 stretches are compositionally biased toward pro residues: residues 707-721 and 760-781; these read GVVP…PPTP and PPTP…PPKP. Over residues 791 to 802 the composition is skewed to low complexity; sequence TKTVAPVVTQAA. 2 stretches are compositionally biased toward pro residues: residues 803-814 and 823-840; these read PPTPTPPVPPAK and YIPP…PPTL. The residue at position 827 (S827) is a Phosphoserine. A Phosphothreonine modification is found at T830. 3 positions are modified to phosphoserine: S845, S853, and S894. Positions 909–947 are enriched in pro residues; it reads IPVPSPDFPPPPPESSLVFPPPPPSPVPAPPPPPPPTAS. Positions 948-968 are enriched in low complexity; the sequence is PTPDKSGSPGKKTSKTSSPGG. A Phosphoserine modification is found at S965. T974 carries the post-translational modification Phosphothreonine. Residues 976–986 show a composition bias toward polar residues; it reads QRNSSIKSSSG. Phosphoserine is present on residues S996 and S1012. Pro residues-rich tracts occupy residues 1018–1027 and 1065–1088; these read LPPPAAPPKP and PSPP…PPIE. Polar residues-rich tracts occupy residues 1131-1144 and 1151-1161; these read TRLT…QPTM and VPTSPKSSLSV. At S1183 the chain carries Phosphoserine. Phosphotyrosine; by ABL1 is present on Y1226. Basic and acidic residues predominate over residues 1238-1250; sequence PKRDQNTKLSRDW.

This sequence belongs to the MRL family. In terms of assembly, interacts with EVL and VASP and targets them to the leading edge. Interacts (via Ras associating and PH domains) with RAC1. As to expression, isoform RMO1-RAPH1 is ubiquitously expressed with highest levels in brain, heart, ovary and developing embryo. Isoform RMO1 is widely expressed with highest levels in liver. Low expression in B-cells.

The protein resides in the cell membrane. It is found in the cell projection. Its subcellular location is the lamellipodium. The protein localises to the filopodium. It localises to the cytoplasm. The protein resides in the cytoskeleton. In terms of biological role, mediator of localized membrane signals. Implicated in the regulation of lamellipodial dynamics. Negatively regulates cell adhesion. The chain is Ras-associated and pleckstrin homology domains-containing protein 1 (RAPH1) from Homo sapiens (Human).